The sequence spans 428 residues: Maltoporin 1 (428 aa).

The N-terminal stretch at 1 to 25 (MTMKVKLLTTSVALALSMTAFSSNA) is a signal peptide.

It belongs to the porin LamB (TC 1.B.3) family. In terms of assembly, homotrimer formed of three 18-stranded antiparallel beta-barrels, containing three independent channels.

The protein localises to the cell outer membrane. It carries out the reaction beta-maltose(in) = beta-maltose(out). Involved in the transport of maltose and maltodextrins. The chain is Maltoporin 1 from Aeromonas salmonicida (strain A449).